Here is a 275-residue protein sequence, read N- to C-terminus: Fructose-2,6-bisphosphatase TIGAR (275 aa).

The active-site Tele-phosphohistidine intermediate is the histidine 11. Glutamate 89 (proton donor/acceptor) is an active-site residue.

This sequence belongs to the phosphoglycerate mutase family.

It localises to the cytoplasm. Its subcellular location is the nucleus. The protein resides in the mitochondrion. The enzyme catalyses beta-D-fructose 2,6-bisphosphate + H2O = beta-D-fructose 6-phosphate + phosphate. Functionally, fructose-bisphosphatase hydrolyzing fructose-2,6-bisphosphate as well as fructose-1,6-bisphosphate. Acts as a negative regulator of glycolysis by lowering intracellular levels of fructose-2,6-bisphosphate in a p53/TP53-dependent manner, resulting in the pentose phosphate pathway (PPP) activation and NADPH production. Contributes to the generation of reduced glutathione to cause a decrease in intracellular reactive oxygen species (ROS) content, correlating with its ability to protect cells from oxidative or metabolic stress-induced cell death. May play a role in mitophagy inhibition. This chain is Fructose-2,6-bisphosphatase TIGAR, found in Xenopus laevis (African clawed frog).